A 154-amino-acid chain; its full sequence is Small ribosomal subunit protein uS9 (154 aa).

Positions 135-154 (KESKKYGLKKARKAPQYSKR) are disordered. The span at 140-154 (YGLKKARKAPQYSKR) shows a compositional bias: basic residues.

It belongs to the universal ribosomal protein uS9 family.

This Salinispora arenicola (strain CNS-205) protein is Small ribosomal subunit protein uS9.